We begin with the raw amino-acid sequence, 854 residues long: Probable inorganic carbon transporter subunit DabA (854 aa).

Zn(2+)-binding residues include Cys-378, Asp-380, His-560, and Cys-575.

This sequence belongs to the inorganic carbon transporter (TC 9.A.2) DabA family. In terms of assembly, forms a complex with DabB. Requires Zn(2+) as cofactor.

Its subcellular location is the cell membrane. In terms of biological role, part of an energy-coupled inorganic carbon pump. In Bacillus cereus (strain ATCC 14579 / DSM 31 / CCUG 7414 / JCM 2152 / NBRC 15305 / NCIMB 9373 / NCTC 2599 / NRRL B-3711), this protein is Probable inorganic carbon transporter subunit DabA.